We begin with the raw amino-acid sequence, 353 residues long: N-acetyl-gamma-glutamyl-phosphate reductase (353 aa).

Residue Cys155 is part of the active site.

Belongs to the NAGSA dehydrogenase family. Type 1 subfamily.

It is found in the cytoplasm. It catalyses the reaction N-acetyl-L-glutamate 5-semialdehyde + phosphate + NADP(+) = N-acetyl-L-glutamyl 5-phosphate + NADPH + H(+). It participates in amino-acid biosynthesis; L-arginine biosynthesis; N(2)-acetyl-L-ornithine from L-glutamate: step 3/4. Its function is as follows. Catalyzes the NADPH-dependent reduction of N-acetyl-5-glutamyl phosphate to yield N-acetyl-L-glutamate 5-semialdehyde. In Microcystis aeruginosa (strain NIES-843 / IAM M-2473), this protein is N-acetyl-gamma-glutamyl-phosphate reductase.